Here is a 415-residue protein sequence, read N- to C-terminus: Vascular endothelial growth factor C (415 aa).

Positions 1–31 (MHLLCFLSLACSLLAAALIPSPREAPATVAA) are cleaved as a signal peptide. Positions 32-107 (FESGLGFSEA…RTGDSVKFAA (76 aa)) are excised as a propeptide. Intrachain disulfides connect C127–C169, C158–C205, and C162–C207. N-linked (GlcNAc...) asparagine glycosylation is found at N171, N201, and N236. The propeptide occupies 224–415 (SLPATLPQCQ…PSYWKRPHLN (192 aa)). Tandem repeats lie at residues 276–291 (CGPN…QCVC), 300–315 (CGPH…QCVC), 324–339 (CGAN…QCVC), and 343–358 (CPRN…ACEC). Positions 276–358 (CGPNKELDED…LNPGKCACEC (83 aa)) are 4 X 16 AA repeats of C-X(10)-C-X-C-X(1,3)-C.

Belongs to the PDGF/VEGF growth factor family. In terms of assembly, homodimer; non-covalent and antiparallel. Interacts with FLT4/VEGFR3; the interaction is required for FLT4/VEGFR3 homodimarization and activation. Post-translationally, undergoes a complex proteolytic maturation which generates a variety of processed secreted forms with increased activity toward VEGFR-3, but only the fully processed form could activate VEGFR-2. VEGF-C first form an antiparallel homodimer linked by disulfide bonds. Before secretion, a cleavage occurs between Arg-223 and Ser-224 producing a heterotetramer. The next extracellular step of the processing removes the N-terminal propeptide. Finally the mature VEGF-C is composed mostly of two VEGF homology domains (VHDs) bound by non-covalent interactions. As to expression, expressed in adult heart, brain, spleen, lung, liver, skeletal muscle, kidney, testis and intestine with higher levels in heart, brain and kidney. Isoform 4 levels are very low. Isoform 3 is mostly expressed in liver and has reduced expression level in other tissues. Isoform 2 is mostly expressed in brain and kidney, although a lower level expression in other tissues is also detectable.

The protein resides in the secreted. Growth factor active in angiogenesis, and endothelial cell growth, stimulating their proliferation and migration and also has effects on the permeability of blood vessels. May function in angiogenesis of the venous and lymphatic vascular systems during embryogenesis, and also in the maintenance of differentiated lymphatic endothelium in adults. Binds and activates KDR/VEGFR2 and FLT4/VEGFR3 receptors. This Mus musculus (Mouse) protein is Vascular endothelial growth factor C (Vegfc).